A 403-amino-acid chain; its full sequence is Histidine--tRNA ligase (403 aa).

This sequence belongs to the class-II aminoacyl-tRNA synthetase family. In terms of assembly, homodimer.

It localises to the cytoplasm. It carries out the reaction tRNA(His) + L-histidine + ATP = L-histidyl-tRNA(His) + AMP + diphosphate + H(+). The protein is Histidine--tRNA ligase (hisS) of Aquifex aeolicus (strain VF5).